The primary structure comprises 20 residues: Short cationic peptide-6a (20 aa).

Serine 20 carries the serine amide modification.

As to expression, expressed by the venom gland.

It localises to the secreted. This Cupiennius salei (American wandering spider) protein is Short cationic peptide-6a.